The sequence spans 351 residues: Carbamoyl phosphate synthase small chain (351 aa).

Residues 1–171 are CPSase; that stretch reads MKGIIYLEDG…IIHIAGNGNK (171 aa). The L-glutamine site is built by Ser45, Gly219, and Gly221. In terms of domain architecture, Glutamine amidotransferase type-1 spans 171–351; the sequence is KVAVMDFGIK…TYLFDQFVNL (181 aa). The active-site Nucleophile is Cys246. Positions 247, 250, 288, 290, and 291 each coordinate L-glutamine. Catalysis depends on residues His331 and Glu333.

It belongs to the CarA family. Composed of two chains; the small (or glutamine) chain promotes the hydrolysis of glutamine to ammonia, which is used by the large (or ammonia) chain to synthesize carbamoyl phosphate. Tetramer of heterodimers (alpha,beta)4.

It catalyses the reaction hydrogencarbonate + L-glutamine + 2 ATP + H2O = carbamoyl phosphate + L-glutamate + 2 ADP + phosphate + 2 H(+). The enzyme catalyses L-glutamine + H2O = L-glutamate + NH4(+). It functions in the pathway amino-acid biosynthesis; L-arginine biosynthesis; carbamoyl phosphate from bicarbonate: step 1/1. The protein operates within pyrimidine metabolism; UMP biosynthesis via de novo pathway; (S)-dihydroorotate from bicarbonate: step 1/3. Functionally, small subunit of the glutamine-dependent carbamoyl phosphate synthetase (CPSase). CPSase catalyzes the formation of carbamoyl phosphate from the ammonia moiety of glutamine, carbonate, and phosphate donated by ATP, constituting the first step of 2 biosynthetic pathways, one leading to arginine and/or urea and the other to pyrimidine nucleotides. The small subunit (glutamine amidotransferase) binds and cleaves glutamine to supply the large subunit with the substrate ammonia. This chain is Carbamoyl phosphate synthase small chain, found in Clostridium acetobutylicum (strain ATCC 824 / DSM 792 / JCM 1419 / IAM 19013 / LMG 5710 / NBRC 13948 / NRRL B-527 / VKM B-1787 / 2291 / W).